Consider the following 226-residue polypeptide: Ribonuclease 3 (226 aa).

The RNase III domain occupies 7 to 129; it reads LARLSRTLGY…IIGAVYLDAN (123 aa). Glu-42 serves as a coordination point for Mg(2+). Asp-46 is a catalytic residue. Asp-115 and Glu-118 together coordinate Mg(2+). Residue Glu-118 is part of the active site. One can recognise a DRBM domain in the interval 156–226; the sequence is DPKTILQEYL…AAQILELINK (71 aa).

It belongs to the ribonuclease III family. Homodimer. Mg(2+) serves as cofactor.

The protein localises to the cytoplasm. It carries out the reaction Endonucleolytic cleavage to 5'-phosphomonoester.. Functionally, digests double-stranded RNA. Involved in the processing of primary rRNA transcript to yield the immediate precursors to the large and small rRNAs (23S and 16S). Processes some mRNAs, and tRNAs when they are encoded in the rRNA operon. Processes pre-crRNA and tracrRNA of type II CRISPR loci if present in the organism. In Shewanella denitrificans (strain OS217 / ATCC BAA-1090 / DSM 15013), this protein is Ribonuclease 3.